The primary structure comprises 339 residues: Biotin synthase (339 aa).

In terms of domain architecture, Radical SAM core spans N53–R271. 3 residues coordinate [4Fe-4S] cluster: C68, C72, and C75. Residues C112, C143, C203, and R275 each coordinate [2Fe-2S] cluster.

It belongs to the radical SAM superfamily. Biotin synthase family. As to quaternary structure, homodimer. It depends on [4Fe-4S] cluster as a cofactor. [2Fe-2S] cluster serves as cofactor.

It catalyses the reaction (4R,5S)-dethiobiotin + (sulfur carrier)-SH + 2 reduced [2Fe-2S]-[ferredoxin] + 2 S-adenosyl-L-methionine = (sulfur carrier)-H + biotin + 2 5'-deoxyadenosine + 2 L-methionine + 2 oxidized [2Fe-2S]-[ferredoxin]. It functions in the pathway cofactor biosynthesis; biotin biosynthesis; biotin from 7,8-diaminononanoate: step 2/2. Functionally, catalyzes the conversion of dethiobiotin (DTB) to biotin by the insertion of a sulfur atom into dethiobiotin via a radical-based mechanism. The chain is Biotin synthase from Agrobacterium fabrum (strain C58 / ATCC 33970) (Agrobacterium tumefaciens (strain C58)).